The primary structure comprises 314 residues: DNA-directed RNA polymerase subunit alpha (314 aa).

The alpha N-terminal domain (alpha-NTD) stretch occupies residues 1 to 228; the sequence is MIEIEKPRIE…EHLNIFVDLT (228 aa). The segment at 245–314 is alpha C-terminal domain (alpha-CTD); it reads KEKVLEMSIE…DLGLGLRKED (70 aa).

The protein belongs to the RNA polymerase alpha chain family. Homodimer. The RNAP catalytic core consists of 2 alpha, 1 beta, 1 beta' and 1 omega subunit. When a sigma factor is associated with the core the holoenzyme is formed, which can initiate transcription.

It carries out the reaction RNA(n) + a ribonucleoside 5'-triphosphate = RNA(n+1) + diphosphate. DNA-dependent RNA polymerase catalyzes the transcription of DNA into RNA using the four ribonucleoside triphosphates as substrates. The protein is DNA-directed RNA polymerase subunit alpha of Macrococcus caseolyticus (strain JCSC5402) (Macrococcoides caseolyticum).